The primary structure comprises 449 residues: Asparagine--tRNA ligase (449 aa).

The protein belongs to the class-II aminoacyl-tRNA synthetase family. As to quaternary structure, homodimer.

It is found in the cytoplasm. It catalyses the reaction tRNA(Asn) + L-asparagine + ATP = L-asparaginyl-tRNA(Asn) + AMP + diphosphate + H(+). The sequence is that of Asparagine--tRNA ligase from Mesomycoplasma hyopneumoniae (strain 7448) (Mycoplasma hyopneumoniae).